The following is a 344-amino-acid chain: MIELQGLSQRFPGGSGEVHALRDVSLSIASGEIFGIIGRSGAGKSTLVRAINLLNRPTSGRVIVAGQDLTALDKGALREARREIGMIFQHFNLLSSRTVYDNVALPLELAGKSKQEIASTVEPLLELVGLSKLRDRYPAQISGGQKQRVGIARALASKPKVLLSDEATSALDPETTRAILDLLKQINRELGLTIVMITHQMEVIKQVCDRVAVLEAGQVVESGRVIDVFLRPQHEVTRAMIGDVIAQELPVSVLKRVESRLGNGRDHVYRLAFTGENVDQPVLAQAIRQHGLDFNILHGHIDEIQGQAFGSLAIMATGELADVRAAMDYLQSQGVVVEEIEHVV.

Positions Ile2–Ile241 constitute an ABC transporter domain. An ATP-binding site is contributed by Gly38–Ser45.

It belongs to the ABC transporter superfamily. Methionine importer (TC 3.A.1.24) family. In terms of assembly, the complex is composed of two ATP-binding proteins (MetN), two transmembrane proteins (MetI) and a solute-binding protein (MetQ).

It is found in the cell inner membrane. It carries out the reaction L-methionine(out) + ATP + H2O = L-methionine(in) + ADP + phosphate + H(+). The enzyme catalyses D-methionine(out) + ATP + H2O = D-methionine(in) + ADP + phosphate + H(+). In terms of biological role, part of the ABC transporter complex MetNIQ involved in methionine import. Responsible for energy coupling to the transport system. The chain is Methionine import ATP-binding protein MetN from Cupriavidus metallidurans (strain ATCC 43123 / DSM 2839 / NBRC 102507 / CH34) (Ralstonia metallidurans).